The following is a 265-amino-acid chain: MGQKVNPYGFRLGITTDHVSRWFSDSTKKGQRYSDYVAEDVRIRTMLKTSLDRAGVARIEIERTRDRVRVDIYTARPGIVIGRRGVEAERIRADLEKLTGKQIQLNILEVKNPEAEAQLVAQGIAEQLAGRVAFRRAMRKGLQGAQRAGAKGVRIQVSGRLGGAEMSRSEFYREGRVPLHTLRANIDYGFYEARTSFGRIGVKVWVYKGDITNKDLAREQANQKSSRPERRNDRSDGRTGDRRTNAPRTAPAAEAAPVAAAGVEA.

Positions 43 to 111 (IRTMLKTSLD…QIQLNILEVK (69 aa)) constitute a KH type-2 domain. Positions 217 to 265 (AREQANQKSSRPERRNDRSDGRTGDRRTNAPRTAPAAEAAPVAAAGVEA) are disordered. Basic and acidic residues predominate over residues 226–244 (SRPERRNDRSDGRTGDRRT). Low complexity predominate over residues 250–265 (APAAEAAPVAAAGVEA).

Belongs to the universal ribosomal protein uS3 family. In terms of assembly, part of the 30S ribosomal subunit. Forms a tight complex with proteins S10 and S14.

Its function is as follows. Binds the lower part of the 30S subunit head. Binds mRNA in the 70S ribosome, positioning it for translation. The sequence is that of Small ribosomal subunit protein uS3 from Clavibacter michiganensis subsp. michiganensis (strain NCPPB 382).